We begin with the raw amino-acid sequence, 293 residues long: Bifunctional protein FolD (293 aa).

NADP(+)-binding positions include 166-168 (GRS), serine 191, and isoleucine 232.

This sequence belongs to the tetrahydrofolate dehydrogenase/cyclohydrolase family. Homodimer.

The enzyme catalyses (6R)-5,10-methylene-5,6,7,8-tetrahydrofolate + NADP(+) = (6R)-5,10-methenyltetrahydrofolate + NADPH. It catalyses the reaction (6R)-5,10-methenyltetrahydrofolate + H2O = (6R)-10-formyltetrahydrofolate + H(+). The protein operates within one-carbon metabolism; tetrahydrofolate interconversion. Catalyzes the oxidation of 5,10-methylenetetrahydrofolate to 5,10-methenyltetrahydrofolate and then the hydrolysis of 5,10-methenyltetrahydrofolate to 10-formyltetrahydrofolate. The polypeptide is Bifunctional protein FolD (Synechococcus sp. (strain JA-2-3B'a(2-13)) (Cyanobacteria bacterium Yellowstone B-Prime)).